The sequence spans 523 residues: Pentatricopeptide repeat-containing protein At1g52640, mitochondrial (523 aa).

Residues 1-5 constitute a mitochondrion transit peptide; that stretch reads MAIRT. PPR repeat units follow at residues 101-135, 137-171, 172-206, 207-241, 242-276, 277-311, 312-346, 347-381, 382-416, and 417-452; these read SLESYHILVEILGSSKQFALLWDFLIEAREYNYFE, SSKVFWIVFRAYSRANLPSEACRAFNRMVEFGIKP, CVDDLDQLLHSLCDKKHVNHAQEFFGKAKGFGIVP, SAKTYSILVRGWARIRDASGARKVFDEMLERNCVV, DLLAYNALLDALCKSGDVDGGYKMFQEMGNLGLKP, DAYSFAIFIHAYCDAGDVHSAYKVLDRMKRYDLVP, NVYTFNHIIKTLCKNEKVDDAYLLLDEMIQKGANP, DTWTYNSIMAYHCDHCEVNRATKLLSRMDRTKCLP, DRHTYNMVLKLLIRIGRFDRATEIWEGMSERKFYP, and TVATYTVMIHGLVRKKGKLEEACRYFEMMIDEGIPP. Positions 498 to 523 are disordered; sequence KRRRLGRRSENSEDDDDDFELERDTI. Over residues 509 to 523 the composition is skewed to acidic residues; that stretch reads SEDDDDDFELERDTI.

This sequence belongs to the PPR family. P subfamily.

It localises to the mitochondrion. This Arabidopsis thaliana (Mouse-ear cress) protein is Pentatricopeptide repeat-containing protein At1g52640, mitochondrial.